Here is a 533-residue protein sequence, read N- to C-terminus: Thromboxane-A synthase (533 aa).

Residues 1–10 (MEVLGLLKFE) lie on the Cytoplasmic side of the membrane. A helical transmembrane segment spans residues 11–31 (VSGTIVTVTLLVALLALLKWY). Over 32-75 (SMSAFSRLEKLGIRHPKPSPFVGNLMFFRQGFWESQLELRERYG) the chain is Lumenal. A helical membrane pass occupies residues 76-96 (PLCGYYLGRRMHVVISEPDMI). Residues 97-223 (KQVLVENFSN…RRASTFCIPR (127 aa)) lie on the Cytoplasmic side of the membrane. Residues 224–244 (PLLVLILSFPSIMVPLARILP) traverse the membrane as a helical segment. The Lumenal segment spans residues 245-335 (NKNRDELNGF…FTVDEIVGQA (91 aa)). The helical transmembrane segment at 336–356 (FLFLIAGHEVITNTLSFITYL) threads the bilayer. At 357–533 (LATHPDCQER…NGVYIKIVSR (177 aa)) the chain is on the cytoplasmic side. Cysteine 479 is a heme binding site.

It belongs to the cytochrome P450 family. In terms of assembly, monomer. It depends on heme as a cofactor. In terms of tissue distribution, expressed primarily in lung, kidney, and spleen.

Its subcellular location is the endoplasmic reticulum membrane. It carries out the reaction prostaglandin H2 = thromboxane A2. The enzyme catalyses prostaglandin H2 = (12S)-hydroxy-(5Z,8E,10E)-heptadecatrienoate + malonaldehyde. It catalyses the reaction a hydroperoxyeicosatetraenoate = an oxoeicosatetraenoate + H2O. The catalysed reaction is (15S)-hydroperoxy-(5Z,8Z,11Z,13E)-eicosatetraenoate = 15-oxo-(5Z,8Z,11Z,13E)-eicosatetraenoate + H2O. It carries out the reaction (15S)-hydroperoxy-(5Z,8Z,11Z,13E)-eicosatetraenoate + AH2 = (15S)-hydroxy-(5Z,8Z,11Z,13E)-eicosatetraenoate + A + H2O. Its function is as follows. Catalyzes the conversion of prostaglandin H2 (PGH2) to thromboxane A2 (TXA2), a potent inducer of blood vessel constriction and platelet aggregation. Also cleaves PGH2 to 12-hydroxy-heptadecatrienoicacid (12-HHT) and malondialdehyde, which is known to act as a mediator of DNA damage. 12-HHT and malondialdehyde are formed stoichiometrically in the same amounts as TXA2. Additionally, displays dehydratase activity, toward (15S)-hydroperoxy-(5Z,8Z,11Z,13E)-eicosatetraenoate (15(S)-HPETE) producing 15-KETE and 15-HETE. This Mus musculus (Mouse) protein is Thromboxane-A synthase (Tbxas1).